Consider the following 163-residue polypeptide: Developmental pluripotency-associated protein 3 (163 aa).

Preferentially expressed in oocyte.

The protein resides in the nucleus. Its subcellular location is the cytoplasm. Its function is as follows. Primordial germ cell (PGCs)-specific protein involved in epigenetic chromatin reprogramming in the zygote following fertilization. In zygotes, DNA demethylation occurs selectively in the paternal pronucleus before the first cell division, while the adjacent maternal pronucleus and certain paternally-imprinted loci are protected from this process. Participates in protection of DNA methylation in the maternal pronucleus by preventing conversion of 5mC to 5hmC: specifically recognizes and binds histone H3 dimethylated at 'Lys-9' (H3K9me2) on maternal genome, and protects maternal genome from TET3-mediated conversion to 5hmC and subsequent DNA demethylation. Does not bind paternal chromatin, which is mainly packed into protamine and does not contain much H3K9me2 mark. Also protects imprinted loci that are marked with H3K9me2 in mature sperm from DNA demethylation in early embryogenesis. May be important for the totipotent/pluripotent states continuing through preimplantation development. Also involved in chromatin condensation in oocytogenesis. The polypeptide is Developmental pluripotency-associated protein 3 (DPPA3) (Bos taurus (Bovine)).